A 282-amino-acid polypeptide reads, in one-letter code: Glucuronoxylan 4-O-methyltransferase 1 (282 aa).

The chain crosses the membrane as a helical span at residues 13 to 33 (VLLVFLLATLILIFIVRSTLT).

The protein belongs to the methyltransferase superfamily. Expressed in rosette leaves, stems, flowers and siliques.

The protein resides in the golgi apparatus membrane. It catalyses the reaction glucuronoxylan D-glucuronate + n S-adenosyl-L-methionine = glucuronoxylan 4-O-methyl-D-glucuronate + n S-adenosyl-L-homocysteine + n H(+). Its function is as follows. Methyltransferase catalyzing 4-O-methylation of glucuronic acid side chains on xylan. The protein is Glucuronoxylan 4-O-methyltransferase 1 (GXM1) of Arabidopsis thaliana (Mouse-ear cress).